We begin with the raw amino-acid sequence, 419 residues long: UDP-N-acetylglucosamine 1-carboxyvinyltransferase (419 aa).

Lysine 22–asparagine 23 contributes to the phosphoenolpyruvate binding site. Arginine 91 is a binding site for UDP-N-acetyl-alpha-D-glucosamine. The active-site Proton donor is the cysteine 115. A 2-(S-cysteinyl)pyruvic acid O-phosphothioketal modification is found at cysteine 115. UDP-N-acetyl-alpha-D-glucosamine-binding positions include arginine 120 to leucine 124, lysine 160 to valine 163, aspartate 305, and valine 327.

Belongs to the EPSP synthase family. MurA subfamily.

The protein resides in the cytoplasm. It carries out the reaction phosphoenolpyruvate + UDP-N-acetyl-alpha-D-glucosamine = UDP-N-acetyl-3-O-(1-carboxyvinyl)-alpha-D-glucosamine + phosphate. Its pathway is cell wall biogenesis; peptidoglycan biosynthesis. Functionally, cell wall formation. Adds enolpyruvyl to UDP-N-acetylglucosamine. The chain is UDP-N-acetylglucosamine 1-carboxyvinyltransferase from Shigella dysenteriae serotype 1 (strain Sd197).